A 248-amino-acid chain; its full sequence is MTRYKAIISYDGSGFYGYQVQPNTRTVQAEIEKALTKMHKGKTVRITASGRTDTGVHAKGQVIHFDSELDITAEKFQKALQVMTPFDISFLTVEEVPDDFHARFGTVGKEYRYVVKRTKIFDPFSRNFALHYPYELDISKMKLASKRLIGEHDFTSFCSARTERDSKVRTLYSIDFYEEDDETLVIAFQGNGFLYNMVRILTGTLLDAGQGRISPDDISEALLARDRQKLISKTAPPQGLYLWRVDYE.

The active-site Nucleophile is the D53. Y111 provides a ligand contact to substrate.

This sequence belongs to the tRNA pseudouridine synthase TruA family. Homodimer.

The enzyme catalyses uridine(38/39/40) in tRNA = pseudouridine(38/39/40) in tRNA. In terms of biological role, formation of pseudouridine at positions 38, 39 and 40 in the anticodon stem and loop of transfer RNAs. This chain is tRNA pseudouridine synthase A, found in Listeria monocytogenes serotype 4b (strain CLIP80459).